The sequence spans 487 residues: MVTKTLSIVFVASEVDGLIKSGGLADVAKALPKSLKELGHSVQIVMPAYKTIAGRDDAEIILTTQLEHWPHTAYQVRSLNVDGIPVFAIESGDYFERAEMYAENNQAYADNGERFAFFSAATLDLLPKLLNKKPDIIHVNDWHTGLIPYLLKKRYVENEFYHQTRSVLSIHNAVFKGIFHYDEIACLSEFKSHFVPEASISHTHVSMLKAGVQCADKINAVSPNYAKELLTELGSHGMASDFQDRESDLIGILNGCDYSEWNPEKDSYIPKQFKVNRISMVRGKKACKAALQQELSLPQKDVAMYGMVCRLTNQKGIQYLLPILEQFLKNDLQLVIVGTGDPVLATRLTEIAQEHSDKFAFVEAYDNKLAHWVEAGSDFFIMPSEFEPCGLNQIYSMAYGTLPIVREVGGLKDSVNNYDDDIENATGFSFKNPEPMELLLVLMRSLLLYSQNLNEVKRVQLHAMKQDFCWNKAALKYIEMYRTAINS.

Position 20 (Lys-20) interacts with ADP-alpha-D-glucose.

This sequence belongs to the glycosyltransferase 1 family. Bacterial/plant glycogen synthase subfamily.

It catalyses the reaction [(1-&gt;4)-alpha-D-glucosyl](n) + ADP-alpha-D-glucose = [(1-&gt;4)-alpha-D-glucosyl](n+1) + ADP + H(+). Its pathway is glycan biosynthesis; glycogen biosynthesis. Synthesizes alpha-1,4-glucan chains using ADP-glucose. The protein is Glycogen synthase of Aliivibrio fischeri (strain ATCC 700601 / ES114) (Vibrio fischeri).